A 267-amino-acid chain; its full sequence is 3-methyl-2-oxobutanoate hydroxymethyltransferase (267 aa).

Positions 45 and 84 each coordinate Mg(2+). 3-methyl-2-oxobutanoate-binding positions include 45-46, Asp-84, and Lys-113; that span reads DS. Glu-115 contacts Mg(2+). Catalysis depends on Glu-182, which acts as the Proton acceptor.

It belongs to the PanB family. Homodecamer; pentamer of dimers. Requires Mg(2+) as cofactor.

The protein localises to the cytoplasm. The catalysed reaction is 3-methyl-2-oxobutanoate + (6R)-5,10-methylene-5,6,7,8-tetrahydrofolate + H2O = 2-dehydropantoate + (6S)-5,6,7,8-tetrahydrofolate. Its pathway is cofactor biosynthesis; coenzyme A biosynthesis. Catalyzes the reversible reaction in which hydroxymethyl group from 5,10-methylenetetrahydrofolate is transferred onto alpha-ketoisovalerate to form ketopantoate. The polypeptide is 3-methyl-2-oxobutanoate hydroxymethyltransferase (Saccharolobus islandicus (strain L.S.2.15 / Lassen #1) (Sulfolobus islandicus)).